A 623-amino-acid chain; its full sequence is Glutathione import ATP-binding protein GsiA (623 aa).

ABC transporter domains are found at residues 18–272 (VRNL…QGLL) and 317–567 (LQVS…RKLM). Residues 52–59 (GESGSGKS) and 360–367 (GESGCGKS) each bind ATP.

Belongs to the ABC transporter superfamily. Glutathione importer (TC 3.A.1.5.11) family. The complex is composed of two ATP-binding proteins (GsiA), two transmembrane proteins (GsiC and GsiD) and a solute-binding protein (GsiB).

It is found in the cell inner membrane. It catalyses the reaction glutathione(out) + ATP + H2O = glutathione(in) + ADP + phosphate + H(+). Part of the ABC transporter complex GsiABCD involved in glutathione import. Responsible for energy coupling to the transport system. This is Glutathione import ATP-binding protein GsiA from Pectobacterium atrosepticum (strain SCRI 1043 / ATCC BAA-672) (Erwinia carotovora subsp. atroseptica).